A 219-amino-acid polypeptide reads, in one-letter code: tRNA (guanine-N(7)-)-methyltransferase (219 aa).

4 residues coordinate S-adenosyl-L-methionine: Glu44, Asp69, Glu102, and Asn125. Residues Lys129 and Asp161 each coordinate substrate.

Belongs to the class I-like SAM-binding methyltransferase superfamily. TrmB family.

The catalysed reaction is guanosine(46) in tRNA + S-adenosyl-L-methionine = N(7)-methylguanosine(46) in tRNA + S-adenosyl-L-homocysteine. The protein operates within tRNA modification; N(7)-methylguanine-tRNA biosynthesis. Catalyzes the formation of N(7)-methylguanine at position 46 (m7G46) in tRNA. This is tRNA (guanine-N(7)-)-methyltransferase from Clostridium perfringens (strain 13 / Type A).